The sequence spans 174 residues: Mytilin-3 (174 aa).

A signal peptide spans 1–16 (MLKGIILIVTIQLVNA).

Component of the organic matrix of calcified shell layers like nacre and prisms.

The protein localises to the secreted. The protein is Mytilin-3 of Mytilus californianus (California mussel).